The chain runs to 113 residues: uncharacterized protein (113 aa).

The protein localises to the mitochondrion. This is an uncharacterized protein from Paramecium tetraurelia.